A 447-amino-acid chain; its full sequence is Sensor protein VanSB (447 aa).

Helical transmembrane passes span 10-30 and 137-155; these read VFSY…TLFA and GIVM…AYIF. An HAMP domain is found at 157-208; the sequence is RQMTTPIKALADSANKMANLKEVPPPLERKDELGALAHDMHSMYIRLKETIA. Positions 230–445 constitute a Histidine kinase domain; sequence AASHELKTPI…LFWLDLPPTS (216 aa). The residue at position 233 (histidine 233) is a Phosphohistidine; by autocatalysis.

The protein localises to the cell membrane. The catalysed reaction is ATP + protein L-histidine = ADP + protein N-phospho-L-histidine.. Member of the two-component regulatory system VanSB/VanRB. Activates the transcription of vanSB, vanYB and vanW in response to vancomycin which results in vancomycin resistance. VanSB may activate VanRB by phosphorylation. May also act as a phospho-VanRB phosphatase. This Enterococcus faecalis (strain ATCC 700802 / V583) protein is Sensor protein VanSB (vanSB).